Reading from the N-terminus, the 89-residue chain is Cell division topological specificity factor (89 aa).

Belongs to the MinE family.

Its function is as follows. Prevents the cell division inhibition by proteins MinC and MinD at internal division sites while permitting inhibition at polar sites. This ensures cell division at the proper site by restricting the formation of a division septum at the midpoint of the long axis of the cell. The polypeptide is Cell division topological specificity factor (Klebsiella pneumoniae subsp. pneumoniae (strain ATCC 700721 / MGH 78578)).